We begin with the raw amino-acid sequence, 692 residues long: Phenoloxidase subunit 2 (692 aa).

A propeptide spanning residues 1–97 (MTDRVKSLQL…PRHQEMATEV (97 aa)) is cleaved from the precursor. 3 residues coordinate Cu cation: histidine 213, histidine 217, and histidine 243. Asparagine 256, asparagine 295, and asparagine 309 each carry an N-linked (GlcNAc...) asparagine glycan. Residue glutamate 351 is the Proton acceptor of the active site. Cu cation-binding residues include histidine 366, histidine 370, and histidine 406. Asparagine 494 is a glycosylation site (N-linked (GlcNAc...) asparagine). Cystine bridges form between cysteine 583/cysteine 628 and cysteine 585/cysteine 635.

The protein belongs to the tyrosinase family. Heterodimer. The cofactor is Cu(2+).

The protein resides in the secreted. It catalyses the reaction L-tyrosine + O2 = L-dopaquinone + H2O. The enzyme catalyses 2 L-dopa + O2 = 2 L-dopaquinone + 2 H2O. Its function is as follows. Copper-containing oxidase that functions in the formation of pigments such as melanins and other polyphenolic compounds. Catalyzes the rate-limiting conversions of tyrosine to DOPA, DOPA to DOPA-quinone and possibly 5,6 dihydroxyindole to indole-5'6 quinone. Binds to the surface of hemocytes and is involved in hemocyte melanization. Binds the A.niger cell wall component alpha-1,3-glucan, a fungal pathogen-associated molecular pattern (PAMP) that activates the host immune response. The chain is Phenoloxidase subunit 2 from Galleria mellonella (Greater wax moth).